A 149-amino-acid polypeptide reads, in one-letter code: Probable ubiquitin-conjugating enzyme E2 12 (149 aa).

A compositionally biased stretch (basic and acidic residues) spans 1-15; that stretch reads MASKRISRELRDMQR. The disordered stretch occupies residues 1–22; the sequence is MASKRISRELRDMQRHPPANCS. The region spanning 1–148 is the UBC core domain; sequence MASKRISREL…AQKWTQKYAM (148 aa). C86 (glycyl thioester intermediate) is an active-site residue.

The protein belongs to the ubiquitin-conjugating enzyme family. As to expression, ubiquitously expressed at very low levels.

It catalyses the reaction S-ubiquitinyl-[E1 ubiquitin-activating enzyme]-L-cysteine + [E2 ubiquitin-conjugating enzyme]-L-cysteine = [E1 ubiquitin-activating enzyme]-L-cysteine + S-ubiquitinyl-[E2 ubiquitin-conjugating enzyme]-L-cysteine.. The protein operates within protein modification; protein ubiquitination. Functionally, accepts the ubiquitin from the E1 complex and catalyzes its covalent attachment to other proteins. This chain is Probable ubiquitin-conjugating enzyme E2 12 (UBC12), found in Arabidopsis thaliana (Mouse-ear cress).